A 353-amino-acid chain; its full sequence is Guanine nucleotide-binding protein subunit alpha (353 aa).

The disordered stretch occupies residues 1-26 (MGCGMSTEEKEGKARNEEIENQLKRD). A lipid anchor (N-myristoyl glycine) is attached at G2. C3 is lipidated: S-palmitoyl cysteine. Over residues 7 to 26 (TEEKEGKARNEEIENQLKRD) the composition is skewed to basic and acidic residues. The G-alpha domain occupies 32 to 353 (NEIKMLLLGA…QENLRLCGLI (322 aa)). Residues 35-48 (KMLLLGAGESGKST) are G1 motif. 14 residues coordinate GTP: E43, S44, G45, K46, S47, T48, D150, L175, T181, G203, N269, K270, D272, and A325. A Mg(2+)-binding site is contributed by S47. Residues 173 to 181 (DVLRSRVKT) are G2 motif. T181 is a Mg(2+) binding site. The G3 motif stretch occupies residues 196–205 (YRMFDVGGQR). The interval 265–272 (ILFLNKID) is G4 motif. Residues 323 to 328 (TCATDT) are G5 motif.

Belongs to the G-alpha family. G(q) subfamily. As to quaternary structure, g proteins are composed of 3 units; alpha, beta and gamma. The alpha chain contains the guanine nucleotide binding site. The cofactor is Mg(2+).

Functionally, guanine nucleotide-binding proteins (G proteins) are involved as modulators or transducers in various transmembrane signaling systems. The polypeptide is Guanine nucleotide-binding protein subunit alpha (Cryphonectria parasitica (Chestnut blight fungus)).